Reading from the N-terminus, the 345-residue chain is Mannonate dehydratase 2 (345 aa).

It belongs to the mannonate dehydratase family. It depends on Fe(2+) as a cofactor. Mn(2+) is required as a cofactor.

It carries out the reaction D-mannonate = 2-dehydro-3-deoxy-D-gluconate + H2O. Its pathway is carbohydrate metabolism; pentose and glucuronate interconversion. In terms of biological role, catalyzes the dehydration of D-mannonate. The sequence is that of Mannonate dehydratase 2 (uxuA2) from Halalkalibacterium halodurans (strain ATCC BAA-125 / DSM 18197 / FERM 7344 / JCM 9153 / C-125) (Bacillus halodurans).